Reading from the N-terminus, the 612-residue chain is FAD-linked oxidoreductase notD' (612 aa).

Positions 1-19 (MRDIRELLLVLFTSCLALG) are cleaved as a signal peptide. Residues Asn50, Asn86, and Asn109 are each glycosylated (N-linked (GlcNAc...) asparagine). The FAD-binding PCMH-type domain occupies 124-307 (GQGRIPRYSA…TSITMPVFGA (184 aa)). Residues Asn311 and Asn396 are each glycosylated (N-linked (GlcNAc...) asparagine).

Belongs to the oxygen-dependent FAD-linked oxidoreductase family. The cofactor is FAD.

Its pathway is alkaloid biosynthesis. In terms of biological role, FAD-linked oxidoreductase; part of the gene cluster that mediates the biosynthesis of notoamide, a fungal indole alkaloid that belongs to a family of natural products containing a characteristic bicyclo[2.2.2]diazaoctane core. The first step of notoamide biosynthesis involves coupling of L-proline and L-tryptophan by the bimodular NRPS notE', to produce cyclo-L-tryptophan-L-proline called brevianamide F. The reverse prenyltransferase notF' then acts as a deoxybrevianamide E synthase and converts brevianamide F to deoxybrevianamide E via reverse prenylation at C-2 of the indole ring leading to the bicyclo[2.2.2]diazaoctane core. Deoxybrevianamide E is further hydroxylated at C-6 of the indole ring, likely catalyzed by the cytochrome P450 monooxygenase notG', to yield 6-hydroxy-deoxybrevianamide E. 6-hydroxy-deoxybrevianamide E is a specific substrate of the prenyltransferase notC' for normal prenylation at C-7 to produce 6-hydroxy-7-prenyl-deoxybrevianamide, also called notoamide S. As the proposed pivotal branching point in notoamide biosynthesis, notoamide S can be diverted to notoamide E through an oxidative pyran ring closure putatively catalyzed by either notH' cytochrome P450 monooxygenase or the notD' FAD-linked oxidoreductase. This step would be followed by an indole 2,3-epoxidation-initiated pinacol-like rearrangement catalyzed by the notB' FAD-dependent monooxygenase leading to the formation of notoamide C and notoamide D. On the other hand notoamide S is converted to notoamide T by notH' (or notD'), a bifunctional oxidase that also functions as the intramolecular Diels-Alderase responsible for generation of (-)-notoamide T. To generate antipodal (+)-notoaminide T, notH (or notD) in Aspergillus strain MF297-2 is expected to catalyze a Diels-Alder reaction leading to the opposite stereochemistry. The remaining oxidoreductase notD' (or notH') likely catalyzes the oxidative pyran ring formation to yield (-)-stephacidin A. The FAD-dependent monooxygenase notI' is highly similar to notB' and is predicted to catalyze a similar conversion from (-)-stephacidin A to (+)-notoamide B via the 2,3-epoxidation of (-)-stephacidin A followed by a pinacol-type rearrangement. Finally, it remains unclear which enzyme could be responsible for the final hydroxylation steps leading to notoamide A and sclerotiamide. In Aspergillus versicolor, this protein is FAD-linked oxidoreductase notD'.